The primary structure comprises 231 residues: Biosynthetic peptidoglycan transglycosylase (231 aa).

The chain crosses the membrane as a helical span at residues Leu-7 to Phe-27.

This sequence belongs to the glycosyltransferase 51 family.

It localises to the cell inner membrane. It catalyses the reaction [GlcNAc-(1-&gt;4)-Mur2Ac(oyl-L-Ala-gamma-D-Glu-L-Lys-D-Ala-D-Ala)](n)-di-trans,octa-cis-undecaprenyl diphosphate + beta-D-GlcNAc-(1-&gt;4)-Mur2Ac(oyl-L-Ala-gamma-D-Glu-L-Lys-D-Ala-D-Ala)-di-trans,octa-cis-undecaprenyl diphosphate = [GlcNAc-(1-&gt;4)-Mur2Ac(oyl-L-Ala-gamma-D-Glu-L-Lys-D-Ala-D-Ala)](n+1)-di-trans,octa-cis-undecaprenyl diphosphate + di-trans,octa-cis-undecaprenyl diphosphate + H(+). The protein operates within cell wall biogenesis; peptidoglycan biosynthesis. Its function is as follows. Peptidoglycan polymerase that catalyzes glycan chain elongation from lipid-linked precursors. In Herminiimonas arsenicoxydans, this protein is Biosynthetic peptidoglycan transglycosylase.